We begin with the raw amino-acid sequence, 102 residues long: NADH-quinone oxidoreductase subunit K 2 (102 aa).

Transmembrane regions (helical) follow at residues 1-21 (MIVPLLHILILAGILFVLGLV), 30-50 (IIMMLIGIEIMLNAAMLAFVG), and 65-85 (LMIMAMTSAEVSLALALVVYL).

This sequence belongs to the complex I subunit 4L family. In terms of assembly, NDH-1 is composed of 14 different subunits. Subunits NuoA, H, J, K, L, M, N constitute the membrane sector of the complex.

Its subcellular location is the cell inner membrane. It carries out the reaction a quinone + NADH + 5 H(+)(in) = a quinol + NAD(+) + 4 H(+)(out). NDH-1 shuttles electrons from NADH, via FMN and iron-sulfur (Fe-S) centers, to quinones in the respiratory chain. The immediate electron acceptor for the enzyme in this species is believed to be ubiquinone. Couples the redox reaction to proton translocation (for every two electrons transferred, four hydrogen ions are translocated across the cytoplasmic membrane), and thus conserves the redox energy in a proton gradient. In Geotalea daltonii (strain DSM 22248 / JCM 15807 / FRC-32) (Geobacter daltonii), this protein is NADH-quinone oxidoreductase subunit K 2.